The primary structure comprises 284 residues: Probable O-methyltransferase ustE (284 aa).

2 N-linked (GlcNAc...) asparagine glycosylation sites follow: Asn22 and Asn29. 2 consecutive transmembrane segments (helical) span residues 88–108 and 157–177; these read LLLL…VLTV and YLAT…VCEI. N-linked (GlcNAc...) asparagine glycosylation occurs at Asn205. A helical transmembrane segment spans residues 215–235; that stretch reads GLALASGGMIYGMSIAMFFMW. N-linked (GlcNAc...) asparagine glycosylation occurs at Asn264.

Belongs to the class VI-like SAM-binding methyltransferase superfamily. Isoprenylcysteine carboxyl methyltransferase family.

Its subcellular location is the membrane. The protein operates within secondary metabolite biosynthesis. In terms of biological role, probable O-methyltransferase; part of the gene cluster that mediates the biosynthesis of ustilaginoidins, dimeric gamma-naphthopyrones isolated from different fungal species. The first step in the biosynthesis of ustilaginoidins is the production of gamma-naphthopyrone precursor YWA1 by the non-reducing polyketide synthase ustP, via condensation of one acetyl-CoA starter unit with 6 malonyl-CoA units. YWA1 is then probably substrate of the ustZ to yield norrubrofusarin via a dehydration reaction. A key enzyme in the biosynthetic pathway is the laccase ustL, which catalyzes the oxidative dimerization of norrubrofusarin to ustilaginoidin A. It can produce the M- and P-atropisomers in varying amounts, depending on the reaction conditions. For the biosynthesis of 3-methylustilaginoid in derivatives such as chaetochromin A, a methylated derivative of YWA1 is required. The C-methylation is considered to be catalyzed by ustM, the phosphopantetheine attachment site of which indicates that it acts on the growing polyketide chain before release of the product. For the biosynthesis of chaetochromin A, it is assumed that saturation of the D2 double bond takes place before dimerization, and is probably catalyzed by an external reductase because no candidate gene was identified within the cluster. This is Probable O-methyltransferase ustE from Ustilaginoidea virens (Rice false smut fungus).